The sequence spans 135 residues: Dihydromethanopterin reductase (135 aa).

Residues alanine 9, 16 to 21 (LGLNGH), 52 to 54 (PKT), and 93 to 97 (GGIAV) contribute to the NADP(+) site.

Homodimer.

The catalysed reaction is 5,6,7,8-tetrahydromethanopterin + NAD(+) = 7,8-dihydromethanopterin + NADH + H(+). The enzyme catalyses 5,6,7,8-tetrahydromethanopterin + NADP(+) = 7,8-dihydromethanopterin + NADPH + H(+). It functions in the pathway cofactor biosynthesis; 5,6,7,8-tetrahydromethanopterin biosynthesis. In terms of biological role, catalyzes the reduction of dihydromethanopterin (H(2)MPT) to tetrahydromethanopterin (H(4)MPT). Shows preference for NADPH rather than NADH as electron donor. Does not reduce dihydrofolate. This is Dihydromethanopterin reductase (dmrA) from Methylorubrum extorquens (strain ATCC 14718 / DSM 1338 / JCM 2805 / NCIMB 9133 / AM1) (Methylobacterium extorquens).